Here is a 539-residue protein sequence, read N- to C-terminus: Cytochrome c oxidase subunit 1 homolog, bacteroid (539 aa).

A run of 3 helical transmembrane segments spans residues 4 to 24 (TVEM…AGLA), 28 to 48 (LFGA…LVLM), and 75 to 95 (GVVA…VVAL). Residue H117 participates in heme b binding. 8 helical membrane passes run 118 to 138 (TSAV…FYVV), 154 to 174 (FVFW…LLGI), 187 to 207 (VDLW…GTIM), 214 to 234 (IYVA…LHVV), 265 to 285 (GHNA…YYFI), 298 to 318 (LSII…PHHL), 330 to 350 (LGMV…INGL), and 368 to 388 (MMVM…MMSI). Cu cation contacts are provided by H266, H316, and H317. Residues H404 and H406 each contribute to the heme b site. 4 helical membrane-spanning segments follow: residues 405 to 425 (VHSG…YYLV), 443 to 463 (HFWL…VAGI), 475 to 495 (QGFL…YYVM), and 499 to 519 (GGAL…MTIL).

Belongs to the heme-copper respiratory oxidase family. Cu(2+) is required as a cofactor. Requires heme b as cofactor.

The protein resides in the cell membrane. The catalysed reaction is 4 Fe(II)-[cytochrome c] + O2 + 8 H(+)(in) = 4 Fe(III)-[cytochrome c] + 2 H2O + 4 H(+)(out). It functions in the pathway energy metabolism; oxidative phosphorylation. Functionally, cytochrome c oxidase is the component of the respiratory chain that catalyzes the reduction of oxygen to water. Subunits 1-3 form the functional core of the enzyme complex. Co I is the catalytic subunit of the enzyme. Electrons originating in cytochrome c or a quinol are transferred to the bimetallic center formed by a high-spin heme and copper B. In Rhizobium meliloti (strain 1021) (Ensifer meliloti), this protein is Cytochrome c oxidase subunit 1 homolog, bacteroid (fixN).